Consider the following 532-residue polypeptide: Phosphoenolpyruvate carboxykinase (ATP) (532 aa).

Substrate contacts are provided by Arg60, Tyr200, and Lys206. ATP is bound by residues Lys206, His225, and 242–250 (GLSGTGKTT). Mn(2+)-binding residues include Lys206 and His225. Ser244 is a substrate binding site. Asp263 contributes to the Mn(2+) binding site. ATP-binding positions include Glu291, Arg327, 443–444 (RI), and Thr449. A substrate-binding site is contributed by Arg327.

Belongs to the phosphoenolpyruvate carboxykinase (ATP) family. In terms of assembly, monomer. Mn(2+) is required as a cofactor.

The protein localises to the cytoplasm. It carries out the reaction oxaloacetate + ATP = phosphoenolpyruvate + ADP + CO2. It functions in the pathway carbohydrate biosynthesis; gluconeogenesis. Its activity is regulated as follows. Inhibited by p-chloromercuribenzoate. Involved in gluconeogenesis. Catalyzes the conversion of oxaloacetate (OAA) to phosphoenolpyruvate (PEP) through direct phosphoryl transfer between the nucleoside triphosphate and OAA. This is Phosphoenolpyruvate carboxykinase (ATP) from Anaerobiospirillum succiniciproducens.